The primary structure comprises 428 residues: Chaperone SurA (428 aa).

An N-terminal signal peptide occupies residues 1–20 (MKNWKTLLLGIAMIANTSFA). PpiC domains follow at residues 171 to 272 (STEL…KVND) and 282 to 382 (VTEV…ELLD).

The protein resides in the periplasm. It carries out the reaction [protein]-peptidylproline (omega=180) = [protein]-peptidylproline (omega=0). Chaperone involved in the correct folding and assembly of outer membrane proteins. Recognizes specific patterns of aromatic residues and the orientation of their side chains, which are found more frequently in integral outer membrane proteins. May act in both early periplasmic and late outer membrane-associated steps of protein maturation. This chain is Chaperone SurA, found in Escherichia coli O157:H7.